The primary structure comprises 294 residues: Maltose/maltodextrin import ATP-binding protein MalK (294 aa).

The ABC transporter domain occupies 4–233; sequence VQLRNVTKAW…PADRFVAGFI (230 aa). Residue 36 to 43 coordinates ATP; it reads GPSGCGKS.

Belongs to the ABC transporter superfamily. Maltooligosaccharide importer (TC 3.A.1.1.1) family. In terms of assembly, the complex is composed of two ATP-binding proteins (MalK), two transmembrane proteins (MalG and MalK) and a solute-binding protein (MalE).

It localises to the cell inner membrane. It carries out the reaction D-maltose(out) + ATP + H2O = D-maltose(in) + ADP + phosphate + H(+). Functionally, part of the ABC transporter complex MalEFGK involved in maltose/maltodextrin import. Responsible for energy coupling to the transport system. This chain is Maltose/maltodextrin import ATP-binding protein MalK, found in Klebsiella aerogenes (Enterobacter aerogenes).